The following is a 431-amino-acid chain: Adenylosuccinate synthetase (431 aa).

GTP is bound by residues 12 to 18 (GDEGKGK) and 40 to 42 (GHT). Catalysis depends on Asp-13, which acts as the Proton acceptor. Residues Asp-13 and Gly-40 each contribute to the Mg(2+) site. IMP-binding positions include 13–16 (DEGK), 38–41 (NAGH), Thr-130, Arg-144, Gln-225, Thr-240, and Arg-304. The active-site Proton donor is the His-41. A substrate-binding site is contributed by 300–306 (STTGRPR). GTP contacts are provided by residues Arg-306, 332 to 334 (KMD), and 414 to 416 (SIG).

It belongs to the adenylosuccinate synthetase family. In terms of assembly, homodimer. Mg(2+) is required as a cofactor.

It localises to the cytoplasm. It catalyses the reaction IMP + L-aspartate + GTP = N(6)-(1,2-dicarboxyethyl)-AMP + GDP + phosphate + 2 H(+). It functions in the pathway purine metabolism; AMP biosynthesis via de novo pathway; AMP from IMP: step 1/2. In terms of biological role, plays an important role in the de novo pathway of purine nucleotide biosynthesis. Catalyzes the first committed step in the biosynthesis of AMP from IMP. This chain is Adenylosuccinate synthetase, found in Syntrophotalea carbinolica (strain DSM 2380 / NBRC 103641 / GraBd1) (Pelobacter carbinolicus).